The chain runs to 158 residues: AP-1 complex subunit sigma-1A (158 aa).

Serine 147 carries the phosphoserine modification.

It belongs to the adaptor complexes small subunit family. In terms of assembly, adaptor protein complex 1 (AP-1) is a heterotetramer composed of two large adaptins (gamma-type subunit AP1G1 and beta-type subunit AP1B1), a medium adaptin (mu-type subunit AP1M1 or AP1M2) and a small adaptin (sigma-type subunit AP1S1 or AP1S2 or AP1S3). In terms of tissue distribution, widely expressed.

It is found in the golgi apparatus. The protein localises to the cytoplasmic vesicle membrane. Its subcellular location is the membrane. The protein resides in the clathrin-coated pit. Functionally, subunit of clathrin-associated adaptor protein complex 1 that plays a role in protein sorting in the late-Golgi/trans-Golgi network (TGN) and/or endosomes. The AP complexes mediate both the recruitment of clathrin to membranes and the recognition of sorting signals within the cytosolic tails of transmembrane cargo molecules. In Homo sapiens (Human), this protein is AP-1 complex subunit sigma-1A (AP1S1).